A 453-amino-acid chain; its full sequence is Endoglucanase A (453 aa).

A signal peptide spans 1 to 26 (MNCRKYLLSGLAVFGLAATSAVAALS). Asp82 acts as the Nucleophile in catalysis. The segment at 115 to 126 (TTPTTRKPTTTP) is linker ('hinge') (Pro-Thr box). The active site involves His417.

The protein belongs to the glycosyl hydrolase 9 (cellulase E) family. In terms of assembly, monomer.

It localises to the periplasm. It catalyses the reaction Endohydrolysis of (1-&gt;4)-beta-D-glucosidic linkages in cellulose, lichenin and cereal beta-D-glucans.. Functionally, high levels of endoglucanase activity detected on acid-swollen cellulose, ball-milled cellulose, and carboxymethyl cellulose; moderate levels detected on filter paper, phosphoric acid-swollen cellulose, lichenan, and xylan. The polypeptide is Endoglucanase A (endA) (Fibrobacter succinogenes (Bacteroides succinogenes)).